Reading from the N-terminus, the 260-residue chain is DNA repair protein RecO (260 aa).

It belongs to the RecO family.

In terms of biological role, involved in DNA repair and RecF pathway recombination. The polypeptide is DNA repair protein RecO (Streptococcus suis (strain 98HAH33)).